The following is a 431-amino-acid chain: Protein translocase subunit SecY (431 aa).

The next 10 membrane-spanning stretches (helical) occupy residues 18–38 (IIFTLLMLIVFRLGSFIPVPH), 64–84 (LFNFSILAMGIMPYITASIII), 116–136 (FTIVLGFIQALGMSYGFNNMA), 146–166 (VGTYLLIAIVLTAGTAFLMWL), 175–195 (VGNGISIIIFAGIVAGIPQTI), 214–234 (IIKVVVILVAILAIVVGVIFI), 262–282 (LPLKVNPAGVIPVIFAVAFIT), 309–329 (PVGMGVYAALIIAFTYFYAFV), 369–389 (FVGSIFLAVIAILPVLFVNIA), and 390–410 (GLPSSAQIGGTSLLIVIGVAL).

It belongs to the SecY/SEC61-alpha family. As to quaternary structure, component of the Sec protein translocase complex. Heterotrimer consisting of SecY, SecE and SecG subunits. The heterotrimers can form oligomers, although 1 heterotrimer is thought to be able to translocate proteins. Interacts with the ribosome. Interacts with SecDF, and other proteins may be involved. Interacts with SecA.

Its subcellular location is the cell membrane. In terms of biological role, the central subunit of the protein translocation channel SecYEG. Consists of two halves formed by TMs 1-5 and 6-10. These two domains form a lateral gate at the front which open onto the bilayer between TMs 2 and 7, and are clamped together by SecE at the back. The channel is closed by both a pore ring composed of hydrophobic SecY resides and a short helix (helix 2A) on the extracellular side of the membrane which forms a plug. The plug probably moves laterally to allow the channel to open. The ring and the pore may move independently. The sequence is that of Protein translocase subunit SecY from Bacillus licheniformis (strain ATCC 14580 / DSM 13 / JCM 2505 / CCUG 7422 / NBRC 12200 / NCIMB 9375 / NCTC 10341 / NRRL NRS-1264 / Gibson 46).